The following is a 50-amino-acid chain: Small nuclear ribonucleoprotein Sm D2 (50 aa).

A disordered region spans residues 1–36 (MSLLNKPKSEMTPEELQKREEEEFNTGPLSVXTQSX). Ser-2 is modified (N-acetylserine). Residues Lys-6 and Lys-8 each participate in a glycyl lysine isopeptide (Lys-Gly) (interchain with G-Cter in SUMO2) cross-link. Residues 7-21 (PKSEMTPEELQKREE) are compositionally biased toward basic and acidic residues. Ser-9 carries the post-translational modification Phosphoserine. Phosphothreonine is present on Thr-12.

This sequence belongs to the snRNP core protein family. Core component of the spliceosomal U1, U2, U4 and U5 small nuclear ribonucleoproteins (snRNPs), the building blocks of the spliceosome. Most spliceosomal snRNPs contain a common set of Sm proteins, SNRPB, SNRPD1, SNRPD2, SNRPD3, SNRPE, SNRPF and SNRPG that assemble in a heptameric protein ring on the Sm site of the small nuclear RNA to form the core snRNP. Component of the U1 snRNP. The U1 snRNP is composed of the U1 snRNA and the 7 core Sm proteins SNRPB, SNRPD1, SNRPD2, SNRPD3, SNRPE, SNRPF and SNRPG, and at least three U1 snRNP-specific proteins SNRNP70/U1-70K, SNRPA/U1-A and SNRPC/U1-C. Component of the U4/U6-U5 tri-snRNP complex composed of the U4, U6 and U5 snRNAs and at least PRPF3, PRPF4, PRPF6, PRPF8, PRPF31, SNRNP200, TXNL4A, SNRNP40, SNRPB, SNRPD1, SNRPD2, SNRPD3, SNRPE, SNRPF, SNRPG, DDX23, CD2BP2, PPIH, SNU13, EFTUD2, SART1 and USP39, plus LSM2, LSM3, LSM4, LSM5, LSM6, LSM7 and LSM8. Component of the minor spliceosome, which splices U12-type introns. Part of the SMN-Sm complex that contains SMN1, GEMIN2/SIP1, DDX20/GEMIN3, GEMIN4, GEMIN5, GEMIN6, GEMIN7, GEMIN8, STRAP/UNRIP and the Sm proteins SNRPB, SNRPD1, SNRPD2, SNRPD3, SNRPE, SNRPF and SNRPG; catalyzes core snRNPs assembly. Forms a 6S pICln-Sm complex composed of CLNS1A/pICln, SNRPD1, SNRPD2, SNRPE, SNRPF and SNRPG; ring-like structure where CLNS1A/pICln mimics additional Sm proteins and which is unable to assemble into the core snRNP. Interacts with SMN1; the interaction is direct. Interacts with GEMIN2; the interaction is direct. Interacts with SNRPD1; the interaction is direct. Interacts with SNRPF; the interaction is direct.

The protein resides in the cytoplasm. It localises to the cytosol. It is found in the nucleus. In terms of biological role, plays a role in pre-mRNA splicing as a core component of the spliceosomal U1, U2, U4 and U5 small nuclear ribonucleoproteins (snRNPs), the building blocks of the spliceosome. Component of both the pre-catalytic spliceosome B complex and activated spliceosome C complexes. As a component of the minor spliceosome, involved in the splicing of U12-type introns in pre-mRNAs. In Sus scrofa (Pig), this protein is Small nuclear ribonucleoprotein Sm D2 (SNRPD2).